A 466-amino-acid chain; its full sequence is Ribulose bisphosphate carboxylase large chain (466 aa).

Residue lysine 4 is modified to N6,N6,N6-trimethyllysine. Positions 113 and 163 each coordinate substrate. Lysine 165 (proton acceptor) is an active-site residue. Lysine 167 serves as a coordination point for substrate. 3 residues coordinate Mg(2+): lysine 191, aspartate 193, and glutamate 194. Position 191 is an N6-carboxylysine (lysine 191). The active-site Proton acceptor is the histidine 284. The substrate site is built by arginine 285, histidine 317, and serine 369.

Belongs to the RuBisCO large chain family. Type I subfamily. Heterohexadecamer of 8 large chains and 8 small chains; disulfide-linked. The disulfide link is formed within the large subunit homodimers. The cofactor is Mg(2+). The disulfide bond which can form in the large chain dimeric partners within the hexadecamer appears to be associated with oxidative stress and protein turnover.

It is found in the plastid. It localises to the chloroplast. The enzyme catalyses 2 (2R)-3-phosphoglycerate + 2 H(+) = D-ribulose 1,5-bisphosphate + CO2 + H2O. The catalysed reaction is D-ribulose 1,5-bisphosphate + O2 = 2-phosphoglycolate + (2R)-3-phosphoglycerate + 2 H(+). RuBisCO catalyzes two reactions: the carboxylation of D-ribulose 1,5-bisphosphate, the primary event in carbon dioxide fixation, as well as the oxidative fragmentation of the pentose substrate in the photorespiration process. Both reactions occur simultaneously and in competition at the same active site. The chain is Ribulose bisphosphate carboxylase large chain from Proboscidea louisianica (Louisiana Devil's-claw).